Consider the following 481-residue polypeptide: Trichosetin biosynthesis cluster MFS transporter (481 aa).

Positions 1 to 13 (MSTTPQMSQSGFQ) are enriched in polar residues. Residues 1–63 (MSTTPQMSQS…DGPDDPQHPL (63 aa)) form a disordered region. Residues 20–31 (GAREDVGTEAQE) show a composition bias toward basic and acidic residues. N-linked (GlcNAc...) asparagine glycosylation occurs at N64. Residues 72 to 92 (LHVGIVSLSTLAANLAATMFA) traverse the membrane as a helical segment. N103 carries N-linked (GlcNAc...) asparagine glycosylation. Helical transmembrane passes span 111-131 (AMTV…LAPL), 147-167 (VYMA…FLVF), 169-189 (IIAG…VADL), 200-220 (ALFA…GGFV), and 228-248 (WTFR…FALM). An N-linked (GlcNAc...) asparagine glycan is attached at N252. Helical transmembrane passes span 302-322 (PIVL…FLLF), 353-373 (LLLM…YGWT), 380-400 (WIVP…VVIP), 403-423 (IYLV…ANLL), and 446-466 (GWGN…PWIF).

Belongs to the major facilitator superfamily.

It is found in the cell membrane. Efflux pump required for efficient secretion of trichosetin or other secondary metabolies produced by the trichosetin gene cluster. Plays a crucial role in detoxification of the toxic trichosetin in Gibberella fujikuroi cells. In Gibberella fujikuroi (strain CBS 195.34 / IMI 58289 / NRRL A-6831) (Bakanae and foot rot disease fungus), this protein is Trichosetin biosynthesis cluster MFS transporter.